The primary structure comprises 89 residues: UPF0223 protein BAMEG_4214 (89 aa).

This sequence belongs to the UPF0223 family.

In Bacillus anthracis (strain CDC 684 / NRRL 3495), this protein is UPF0223 protein BAMEG_4214.